The primary structure comprises 95 residues: RING finger protein Z (95 aa).

A compositionally biased stretch (low complexity) spans 1 to 16 (MGNSKSKSNPSSSSES). The interval 1 to 23 (MGNSKSKSNPSSSSESQKGAPTV) is disordered. Residue glycine 2 is the site of N-myristoyl glycine; by host attachment. The segment at 40 to 76 (CKCCWFADKNLIKCSDHYLCLRCLNVMLKNSDLCNIC) adopts an RING-type; atypical zinc-finger fold. Positions 90-93 (PSAP) match the PTAP/PSAP motif motif.

It belongs to the arenaviridae Z protein family. As to quaternary structure, interacts with protein NP; this interaction probably directs the encapsidated genome to budding sites. Interacts (via RING domain) with polymerase L; this interaction inhibits viral transcription and replication, Z partially blocks the product exit tunnel for the releasing nascent RNA product. Interacts with the glycoprotein complex; this interaction plays a role in virion budding. Interacts with host eIF4E; this interaction results in eIF4E reduced affinity for its substrate, the 5'-m7 G cap structure. Interacts (via late-budding domain) with host TSG101; this interaction is essential for budding and release of viral particles. Interacts with host RPLP0; this interaction may serve to load ribosome-like particles inside the virion. Interacts with host PML; this interaction induces PML bodies redistribution in the cytoplasm upon viral infection. Myristoylation is required for the role of RING finger protein Z in assembly and budding.

The protein localises to the virion. It is found in the host cytoplasm. It localises to the host perinuclear region. The protein resides in the host cell membrane. Its function is as follows. Plays a crucial role in virion assembly and budding. Expressed late in the virus life cycle, it acts as an inhibitor of viral transcription and RNA synthesis by interacting with the viral polymerase L. Presumably recruits the NP encapsidated genome to cellular membranes at budding sites via direct interaction with NP. Plays critical roles in the final steps of viral release by interacting with host TSG101, a member of the vacuolar protein-sorting pathway and using other cellular host proteins involved in vesicle formation pathway. The budding of the virus progeny occurs after association of protein Z with the viral glycoprotein complex SSP-GP1-GP2 at the cell periphery, step that requires myristoylation of protein Z. Also selectively represses protein production by associating with host eIF4E. In cell-based minigenome assay, has an inhibitory effect on the ribonucleoprotein machinery (vRNP), which is responsible for the replication and transcription of the viral genome. The protein is RING finger protein Z of Guanarito mammarenavirus (isolate Human/Venezuela/NH-95551/1990) (GTOV).